The following is a 357-amino-acid chain: Fluoren-9-ol dehydrogenase (357 aa).

NADP(+) contacts are provided by residues 36-67 (VTGG…TWDD) and Asp87. The active-site Proton acceptor is the Tyr198. Residue Lys202 participates in NADP(+) binding.

Belongs to the short-chain dehydrogenases/reductases (SDR) family.

The catalysed reaction is 9H-fluoren-9-ol + NADP(+) = 9H-fluoren-9-one + NADPH + H(+). The enzyme catalyses 9H-fluoren-9-ol + NAD(+) = 9H-fluoren-9-one + NADH + H(+). The protein operates within aromatic compound metabolism. Functionally, catalyzes the dehydrogenation of both 9-fluorenol and 1,1a-dihydroxy-1-hydro-9-fluorenone to produce 9-fluorenone and 2'-carboxy-2,3- dihydroxybiphenyl, respectively. This is Fluoren-9-ol dehydrogenase from Terrabacter sp. (strain DBF63).